The sequence spans 894 residues: Interleukin enhancer-binding factor 3 (894 aa).

The region spanning 5 to 378 (RIFVNDDRHV…PMKRPMEEDG (374 aa)) is the DZF domain. The segment at 50 to 86 (DEQEKGSSEQAESDNMDVPPEDDSKEGAGEQKTEHMT) is disordered. The span at 60-73 (AESDNMDVPPEDDS) shows a compositional bias: acidic residues. A Phosphoserine modification is found at serine 62. Over residues 74–86 (KEGAGEQKTEHMT) the composition is skewed to basic and acidic residues. Lysine 100 is subject to N6-acetyllysine. Threonine 188 is modified (phosphothreonine; by PKR). At serine 190 the chain carries Phosphoserine. A Glycyl lysine isopeptide (Lys-Gly) (interchain with G-Cter in ubiquitin) cross-link involves residue lysine 297. Threonine 315 is subject to Phosphothreonine; by PKR. Residue lysine 348 forms a Glycyl lysine isopeptide (Lys-Gly) (interchain with G-Cter in SUMO1) linkage. The segment at 363–401 (TTYAITPMKRPMEEDGEEKSPSKKKKKIQKKEEKAEPPQ) is disordered. The Bipartite nuclear localization signal motif lies at 371–389 (KRPMEEDGEEKSPSKKKKK). Residues 372–383 (RPMEEDGEEKSP) are compositionally biased toward basic and acidic residues. Residues serine 382 and serine 384 each carry the phosphoserine modification. Lysine 396 is covalently cross-linked (Glycyl lysine isopeptide (Lys-Gly) (interchain with G-Cter in SUMO2)). The DRBM 1 domain occupies 398–467 (EPPQAMNALM…AVKVLQDMGL (70 aa)). Lysine 460 is subject to N6-acetyllysine. The disordered stretch occupies residues 466-524 (GLPTGAEGRDSSKGEDSAEETEAKPAVVAPAPVVEAVSTPSAAFPSDATAEQGPILTKH). Residues 472 to 481 (EGRDSSKGED) show a composition bias toward basic and acidic residues. Phosphoserine is present on residues serine 476, serine 477, and serine 482. Lysine 489 participates in a covalent cross-link: Glycyl lysine isopeptide (Lys-Gly) (interchain with G-Cter in SUMO2). Low complexity predominate over residues 489–508 (KPAVVAPAPVVEAVSTPSAA). The DRBM 2 domain maps to 524–590 (HGKNPVMELN…ALAALEKLFP (67 aa)). At threonine 592 the chain carries Phosphothreonine. The tract at residues 609 to 894 (RGGPKFAAKP…ADHSMNYQYR (286 aa)) is interaction with PRMT1. Disordered regions lie at residues 625-660 (MGGP…FGGA) and 718-894 (QGDN…YQYR). Positions 644–660 (RGGSIRGRGRGRGFGGA) are enriched in gly residues. Low complexity-rich tracts occupy residues 743-770 (PSYG…YGPP) and 777-792 (YNHG…SYNS). Phosphoserine is present on residues serine 792, serine 810, serine 812, and serine 816. Composition is skewed to gly residues over residues 811 to 825 (GSGG…GSGG) and 832 to 851 (SHGG…GKQG). Over residues 857 to 866 (NYNSPGSGQN) the composition is skewed to polar residues. Positions 867 to 878 (YSGPPSSYQSSQ) are enriched in low complexity.

As to quaternary structure, identified in a IGF2BP1-dependent mRNP granule complex containing untranslated mRNAs. Interacts with FUS and SMN. Interacts (via C-terminus) with PRMT1. Forms a complex with ILF2. Can also bind to PRKDC/XRCC7: this may stabilize the interaction of PRKDC/XRCC7 and the heterodimeric complex of XRCC6/KU70 and XRCC5/KU80. Forms a heteromeric complex with ZNF346 and ILF3. Found in a nuclear export complex with XPO5, ILF3, Ran and double-stranded RNA or double-stranded minihelix VA1 RNA. Found in a nuclear export complex with XPO5, RAN, ILF3, ZNF346 and double-stranded RNA. Interacts with XPO5 and ZNF346. Forms a complex with ILF2, YLPM1, KHDRBS1, RBMX, NCOA5 and PPP1CA. Interacts with AGO1 and AGO2. Interacts with DHX36; this interaction occurs in a RNA-dependent manner. Interacts with ELAVL1; this interaction occurs in a RNA-dependent manner. Interacts with HAVCR2; this interaction promotes ILF3 ubiquitination and subsequent degradation. In terms of processing, phosphorylated at Thr-188 and Thr-315 by PKR in response to certain RNA viruses. This phosphorylation results in the dissociation of ILF2 from the ILF2-ILF3 complex resulting in a cytoplasmic sequestration of ILF3 where it can bind to viral RNAs and impede viral replication. Post-translationally, methylated by protein arginine N-methyltransferase 1. Ubiquitinated at Lys-297 in a TRIM47-dependent manner; this 'Lys-48'-linked ubiquitination promotes ILF3 degradation. As to expression, ubiquitous.

It localises to the nucleus. The protein resides in the nucleolus. The protein localises to the cytoplasm. Functionally, RNA-binding protein that plays an essential role in the biogenesis of circular RNAs (circRNAs) which are produced by back-splicing circularization of pre-mRNAs. Within the nucleus, promotes circRNAs processing by stabilizing the regulatory elements residing in the flanking introns of the circularized exons. Plays thereby a role in the back-splicing of a subset of circRNAs. As a consequence, participates in a wide range of transcriptional and post-transcriptional processes. Binds to poly-U elements and AU-rich elements (AREs) in the 3'-UTR of target mRNAs. Upon viral infection, ILF3 accumulates in the cytoplasm and participates in the innate antiviral response. Mechanistically, ILF3 becomes phosphorylated and activated by the double-stranded RNA-activated protein kinase/PKR which releases ILF3 from cellular mature circRNAs. In turn, unbound ILF3 molecules are able to interact with and thus inhibit viral mRNAs. Its function is as follows. (Microbial infection) Plays a positive role in HIV-1 virus production by binding to and thereby stabilizing HIV-1 RNA, together with ILF3. The protein is Interleukin enhancer-binding factor 3 (ILF3) of Homo sapiens (Human).